The chain runs to 346 residues: UPF0053 protein sll1254 (346 aa).

The next 4 helical transmembrane spans lie at 1–21, 58–78, 87–107, and 121–141; these read MLEIVAAIFIVLLGSGICSCA, IGTIVVLNNIFNIVGSITIGA, AWMGVFSGILTLLIIVFGEII, and LLIAIPVRFLTLIFTPLVWLI. Positions 1 to 179 constitute a CNNM transmembrane domain; sequence MLEIVAAIFI…YKEGVIEGDE (179 aa). CBS domains lie at 198 to 259 and 263 to 320; these read MTPR…GYKT and LARP…IVDE.

The protein belongs to the UPF0053 family.

Its subcellular location is the cell membrane. This chain is UPF0053 protein sll1254, found in Synechocystis sp. (strain ATCC 27184 / PCC 6803 / Kazusa).